The primary structure comprises 324 residues: Beta-ketoacyl-[acyl-carrier-protein] synthase III (324 aa).

Catalysis depends on residues C112 and H249. The segment at 250–254 is ACP-binding; it reads QANRR. Residue N279 is part of the active site.

It belongs to the thiolase-like superfamily. FabH family. Homodimer.

The protein localises to the cytoplasm. It catalyses the reaction malonyl-[ACP] + acetyl-CoA + H(+) = 3-oxobutanoyl-[ACP] + CO2 + CoA. The protein operates within lipid metabolism; fatty acid biosynthesis. In terms of biological role, catalyzes the condensation reaction of fatty acid synthesis by the addition to an acyl acceptor of two carbons from malonyl-ACP. Catalyzes the first condensation reaction which initiates fatty acid synthesis and may therefore play a role in governing the total rate of fatty acid production. Possesses both acetoacetyl-ACP synthase and acetyl transacylase activities. Its substrate specificity determines the biosynthesis of branched-chain and/or straight-chain of fatty acids. The chain is Beta-ketoacyl-[acyl-carrier-protein] synthase III from Streptococcus pyogenes serotype M49 (strain NZ131).